A 367-amino-acid chain; its full sequence is Uroporphyrinogen decarboxylase (367 aa).

N-acetylmethionine is present on methionine 1. Coproporphyrinogen I is bound by residues arginine 37, alanine 39, arginine 41, arginine 50, aspartate 86, tyrosine 164, serine 219, and histidine 339. Residues arginine 37, alanine 39, and arginine 41 each contribute to the coproporphyrinogen III site. Coproporphyrinogen III is bound by residues aspartate 86, tyrosine 164, serine 219, and histidine 339.

The protein belongs to the uroporphyrinogen decarboxylase family. Homodimer.

Its subcellular location is the cytoplasm. It is found in the cytosol. The enzyme catalyses uroporphyrinogen III + 4 H(+) = coproporphyrinogen III + 4 CO2. It catalyses the reaction uroporphyrinogen I + 4 H(+) = coproporphyrinogen I + 4 CO2. Its pathway is porphyrin-containing compound metabolism; protoporphyrin-IX biosynthesis; coproporphyrinogen-III from 5-aminolevulinate: step 4/4. Catalyzes the sequential decarboxylation of the four acetate side chains of uroporphyrinogen to form coproporphyrinogen and participates in the fifth step in the heme biosynthetic pathway. Isomer I or isomer III of uroporphyrinogen may serve as substrate, but only coproporphyrinogen III can ultimately be converted to heme. In vitro also decarboxylates pentacarboxylate porphyrinogen I. In Ovis aries (Sheep), this protein is Uroporphyrinogen decarboxylase.